An 828-amino-acid polypeptide reads, in one-letter code: Putative alpha-1,3-mannosyltransferase MNN12 (828 aa).

Residues 1–13 are Cytoplasmic-facing; the sequence is MIEKLTIKRSRQK. A helical membrane pass occupies residues 14 to 34; it reads VIAYSVIIIWLMIVNIWLLNN. The Lumenal segment spans residues 35–828; sequence YHLNSSTLTR…YYGDVWVGME (794 aa). N38 is a glycosylation site (N-linked (GlcNAc...) asparagine). Positions 80 to 104 are disordered; that stretch reads HQEEDVPNSQSTDNSLIKPTSPAKN. Over residues 86–103 the composition is skewed to polar residues; it reads PNSQSTDNSLIKPTSPAK. N-linked (GlcNAc...) asparagine glycosylation is found at N247, N437, and N591.

Belongs to the MNN1/MNT family.

Its subcellular location is the golgi apparatus membrane. It participates in protein modification; protein glycosylation. Its function is as follows. Responsible for addition of the terminal mannose residues to the outer chain of core N-linked polysaccharides and to O-linked mannotriose. Implicated in late Golgi modifications. In Candida albicans (strain SC5314 / ATCC MYA-2876) (Yeast), this protein is Putative alpha-1,3-mannosyltransferase MNN12 (MNN12).